We begin with the raw amino-acid sequence, 146 residues long: 3-hydroxyacyl-[acyl-carrier-protein] dehydratase FabZ (146 aa).

The active site involves histidine 49.

This sequence belongs to the thioester dehydratase family. FabZ subfamily.

The protein resides in the cytoplasm. The enzyme catalyses a (3R)-hydroxyacyl-[ACP] = a (2E)-enoyl-[ACP] + H2O. Functionally, involved in unsaturated fatty acids biosynthesis. Catalyzes the dehydration of short chain beta-hydroxyacyl-ACPs and long chain saturated and unsaturated beta-hydroxyacyl-ACPs. This Azotobacter vinelandii (strain DJ / ATCC BAA-1303) protein is 3-hydroxyacyl-[acyl-carrier-protein] dehydratase FabZ.